The sequence spans 1299 residues: Probable membrane antigen 75 (1299 aa).

Its subcellular location is the virion tegument. This is Probable membrane antigen 75 (75) from Saimiriine herpesvirus 2 (strain 11) (SaHV-2).